Reading from the N-terminus, the 595-residue chain is MFS-type efflux pump MFS2 (595 aa).

Asparagine 62 carries an N-linked (GlcNAc...) asparagine glycan. The next 12 helical transmembrane spans lie at 69–89 (WSIT…SSAY), 106–126 (VITL…LIWA), 136–156 (LLFF…AGSP), 166–186 (FFAG…IADM), 197–217 (GIFA…GGFL), 225–245 (WVEG…SIFL), 301–321 (PIVL…YMLF), 336–356 (PGIG…AMVI), 381–401 (LPVA…FAWT), 409–429 (IVSI…FLSL), 442–462 (ASVL…FPLF), and 478–498 (IPAF…IYGA).

This sequence belongs to the major facilitator superfamily. DHA1 family. Polyamines/proton antiporter (TC 2.A.1.2.16) subfamily.

Its subcellular location is the cell membrane. MFS-type efflux pump involved in the modulation susceptibility to fluconazole and voriconazole, 2 azoles with similar molecular structure. The protein is MFS-type efflux pump MFS2 of Trichophyton rubrum (strain ATCC MYA-4607 / CBS 118892) (Athlete's foot fungus).